The primary structure comprises 247 residues: MAGHSKWANIKFRKGVQDAKRGKIFTKLIREITVAARMGGGDESSNPRLRDAVKKALNANMKRDTIDNAVKRGVGGVDGEAMIAMRYEGYGPGGVAILVDCLSDNKNRTVSEVRHAFSKHGGNLGTDGSVSYLFTNQGEILMASNQPEDKVMEIAIDAGASDVAVEDGQIEIITPVEAYHTVLNALQDAGLEVEQSHLTMRAQTLVPINDETAESLIKLIDMLEDLDDVQEVYSNAEFSEKILESMN.

Belongs to the TACO1 family.

The protein resides in the cytoplasm. The sequence is that of Probable transcriptional regulatory protein lpg1286 from Legionella pneumophila subsp. pneumophila (strain Philadelphia 1 / ATCC 33152 / DSM 7513).